The following is a 92-amino-acid chain: Acyl-CoA-binding protein (92 aa).

Residues 3–88 (LKEDFEEHAE…VKQLLEAEAS (86 aa)) form the ACB domain. An acyl-CoA is bound by residues 30–34 (YGLYK), Lys56, and Tyr75.

It belongs to the ACBP family.

Binds medium- and long-chain acyl-CoA esters with very high affinity and may function as an intracellular carrier of acyl-CoA esters. This Brassica napus (Rape) protein is Acyl-CoA-binding protein.